A 218-amino-acid chain; its full sequence is OPA3-like protein (218 aa).

Residues 129 to 179 (NEIMEKQFVLQKKKNELQSSTEEIDSTEKDFDELHKVILKVERELHTLRQN) are a coiled coil. The disordered stretch occupies residues 175–218 (TLRQNTPSQNEQAEATPSKEIPRETVSEKADHPPSSNTKSVSTG). The segment covering 176-189 (LRQNTPSQNEQAEA) has biased composition (polar residues). Positions 194 to 206 (EIPRETVSEKADH) are enriched in basic and acidic residues. Residues 208–218 (PSSNTKSVSTG) show a composition bias toward polar residues.

Belongs to the OPA3 family.

The polypeptide is OPA3-like protein (Schizosaccharomyces pombe (strain 972 / ATCC 24843) (Fission yeast)).